The chain runs to 151 residues: Large ribosomal subunit protein uL13 (151 aa).

Belongs to the universal ribosomal protein uL13 family. In terms of assembly, part of the 50S ribosomal subunit.

Its function is as follows. This protein is one of the early assembly proteins of the 50S ribosomal subunit, although it is not seen to bind rRNA by itself. It is important during the early stages of 50S assembly. The protein is Large ribosomal subunit protein uL13 of Nostoc sp. (strain PCC 7120 / SAG 25.82 / UTEX 2576).